The sequence spans 1534 residues: Dicer-like protein 2 (1534 aa).

Residues M1–P10 are compositionally biased toward basic and acidic residues. The disordered stretch occupies residues M1–E36. Positions V11–N27 are enriched in acidic residues. In terms of domain architecture, Helicase ATP-binding spans T65–A249. M78 to Q85 provides a ligand contact to ATP. The DEAH box motif lies at D192–H195. The Helicase C-terminal domain occupies K404–P575. A Dicer dsRNA-binding fold domain is found at A597–A700. RNase III domains follow at residues M959–G1107 and L1153–G1353. Mg(2+) contacts are provided by E1193, D1339, and E1342. Residues H1383 to A1483 form the DRBM domain. Positions K1492–E1504 are enriched in basic and acidic residues. The tract at residues K1492–N1534 is disordered. A compositionally biased stretch (polar residues) spans N1505–S1515. The span at G1516 to D1528 shows a compositional bias: basic and acidic residues.

Belongs to the helicase family. Dicer subfamily. Mg(2+) is required as a cofactor. It depends on Mn(2+) as a cofactor.

In terms of biological role, dicer-like endonuclease involved in cleaving double-stranded RNA in the RNA interference (RNAi) pathway. Produces 21 to 25 bp dsRNAs (siRNAs) which target the selective destruction of homologous RNAs leading to sequence-specific suppression of gene expression, called post-transcriptional gene silencing (PTGS). Part of a broad host defense response against viral infection and transposons. Controls the expression of the non-LTR retrotransposon Tad in the African strain, Adiomopoume. The sequence is that of Dicer-like protein 2 (dcl-2) from Neurospora crassa (strain ATCC 24698 / 74-OR23-1A / CBS 708.71 / DSM 1257 / FGSC 987).